Reading from the N-terminus, the 256-residue chain is tRNA (guanine-N(7)-)-methyltransferase (256 aa).

The segment at 17 to 45 (TCETVPGLPQKKHYRQRAHSNPHSDHDIE) is disordered. Basic residues predominate over residues 26–36 (QKKHYRQRAHS). S-adenosyl-L-methionine-binding positions include glycine 74, 97 to 98 (EI), 132 to 133 (NA), and leucine 152. The active site involves aspartate 155. 230-232 (TEE) lines the S-adenosyl-L-methionine pocket.

Belongs to the class I-like SAM-binding methyltransferase superfamily. TrmB family.

It is found in the nucleus. It catalyses the reaction guanosine(46) in tRNA + S-adenosyl-L-methionine = N(7)-methylguanosine(46) in tRNA + S-adenosyl-L-homocysteine. Its pathway is tRNA modification; N(7)-methylguanine-tRNA biosynthesis. Functionally, catalyzes the formation of N(7)-methylguanine at position 46 (m7G46) in tRNA. The chain is tRNA (guanine-N(7)-)-methyltransferase from Caenorhabditis elegans.